The following is a 150-amino-acid chain: Lymphocyte antigen 6 complex locus protein G5c (150 aa).

A signal peptide spans 1–41 (MRFMAGPAGSQSLGPLCFHSSPQALYTVLLIVLVMMSLVFG). Residues 60 to 150 (LRCYRCLLET…DPQNRGLYTP (91 aa)) form the UPAR/Ly6 domain. 4 disulfides stabilise this stretch: C62-C89, C65-C74, C81-C107, and C134-C139. The N-linked (GlcNAc...) asparagine glycan is linked to N96.

In terms of assembly, forms oligomers. N-glycosylated. As to expression, detected in T-cell lines and fetal and adult lung.

It localises to the secreted. In terms of biological role, may have a role in hematopoietic cell differentiation. In Homo sapiens (Human), this protein is Lymphocyte antigen 6 complex locus protein G5c (LY6G5C).